The following is a 905-amino-acid chain: Transcription termination factor 1 (905 aa).

Composition is skewed to basic and acidic residues over residues 1 to 16 (MEGESSRFEIHTPVSD) and 24 to 33 (IHKERPQKHS). The segment at 1-33 (MEGESSRFEIHTPVSDKKKKKCSIHKERPQKHS) is disordered. Residues 1–223 (MEGESSRFEI…AHKNKSKKKK (223 aa)) form an N-terminal region (NRD) region. At Ser65 the chain carries Phosphoserine. The disordered stretch occupies residues 151-443 (SHAHKSEALH…KSRPRQKKTQ (293 aa)). Composition is skewed to basic residues over residues 163–174 (VREKKNKKHQRK) and 215–226 (HKNKSKKKKKKS). Ser240 carries the phosphoserine modification. The residue at position 248 (Thr248) is a Phosphothreonine. Composition is skewed to basic residues over residues 270-283 (THKKKSKKKKKKKS), 330-339 (NKSKKKKKKS), and 385-401 (TKKKSKKRKLTSVKRAR). Ser403 carries the post-translational modification Phosphoserine. The span at 410–419 (PSKNSESTLF) shows a compositional bias: polar residues. At Tyr476 the chain carries Phosphotyrosine. Residues Ser478, Ser481, and Ser487 each carry the phosphoserine modification. Positions 498-886 (LQEFIPNIKD…IEKESEGQAP (389 aa)) are may be involved in interaction with ARF. Myb-like domains follow at residues 612–661 (DVNN…SQIS) and 661–745 (SSQR…TEIL). Lys700 is covalently cross-linked (Glycyl lysine isopeptide (Lys-Gly) (interchain with G-Cter in SUMO2)). Ser872 carries the post-translational modification Phosphoserine.

As to quaternary structure, oligomer. The oligomeric structure enables to interact simultaneously with two separate DNA fragments. Interacts with BAZ2A/TIP5. Interacts with CAVIN1. Interacts (via the N-terminal region (NRD) and a C-terminal region) with CDKN2A/ARF; the interaction is direct. Interacts (via C-terminal region) with NPM1/B23.

It localises to the nucleus. Its subcellular location is the nucleolus. The protein resides in the nucleoplasm. Functionally, multifunctional nucleolar protein that terminates ribosomal gene transcription, mediates replication fork arrest and regulates RNA polymerase I transcription on chromatin. Plays a dual role in rDNA regulation, being involved in both activation and silencing of rDNA transcription. Interaction with BAZ2A/TIP5 recovers DNA-binding activity. The polypeptide is Transcription termination factor 1 (TTF1) (Homo sapiens (Human)).